The chain runs to 389 residues: Choline/ethanolaminephosphotransferase 1 (389 aa).

Residues Val40–Thr60 form a helical membrane-spanning segment. Asn48 provides a ligand contact to CDP-choline. Asp95 and Asp98 together coordinate Mg(2+). Arg103 provides a ligand contact to CDP-choline. Mg(2+) is bound at residue Asp116. His117 acts as the Proton acceptor in catalysis. Asp120 contacts Mg(2+). The next 7 membrane-spanning stretches (helical) occupy residues Thr141–Phe161, Gly176–Ala196, Val221–Val241, Met252–Trp272, Leu280–Val300, Ser322–Leu344, and Val350–Ile370.

Belongs to the CDP-alcohol phosphatidyltransferase class-I family. Mg(2+) serves as cofactor. Mn(2+) is required as a cofactor.

It is found in the membrane. It catalyses the reaction CDP-ethanolamine + a 1,2-diacyl-sn-glycerol = a 1,2-diacyl-sn-glycero-3-phosphoethanolamine + CMP + H(+). It carries out the reaction CDP-choline + a 1,2-diacyl-sn-glycerol = a 1,2-diacyl-sn-glycero-3-phosphocholine + CMP + H(+). It participates in phospholipid metabolism; phosphatidylethanolamine biosynthesis; phosphatidylethanolamine from ethanolamine: step 3/3. It functions in the pathway phospholipid metabolism; phosphatidylcholine biosynthesis; phosphatidylcholine from phosphocholine: step 2/2. Its function is as follows. Catalyzes both phosphatidylcholine and phosphatidylethanolamine biosynthesis from CDP-choline and CDP-ethanolamine, respectively. Has a higher cholinephosphotransferase activity than ethanolaminephosphotransferase activity. The protein is Choline/ethanolaminephosphotransferase 1 (AAPT1) of Arabidopsis thaliana (Mouse-ear cress).